A 54-amino-acid chain; its full sequence is ATP synthase protein 8 (54 aa).

Residues 9-29 (WIINFFIVWTADFTLLIVLSI) traverse the membrane as a helical segment.

Belongs to the ATPase protein 8 family. In terms of assembly, F-type ATPases have 2 components, CF(1) - the catalytic core - and CF(0) - the membrane proton channel.

Its subcellular location is the mitochondrion membrane. Functionally, mitochondrial membrane ATP synthase (F(1)F(0) ATP synthase or Complex V) produces ATP from ADP in the presence of a proton gradient across the membrane which is generated by electron transport complexes of the respiratory chain. F-type ATPases consist of two structural domains, F(1) - containing the extramembraneous catalytic core and F(0) - containing the membrane proton channel, linked together by a central stalk and a peripheral stalk. During catalysis, ATP synthesis in the catalytic domain of F(1) is coupled via a rotary mechanism of the central stalk subunits to proton translocation. Part of the complex F(0) domain. Minor subunit located with subunit a in the membrane. This is ATP synthase protein 8 (MT-ATP8) from Arbacia lixula (Black urchin).